The following is a 503-amino-acid chain: Probable cytosol aminopeptidase (503 aa).

2 residues coordinate Mn(2+): lysine 270 and aspartate 275. The active site involves lysine 282. Mn(2+) is bound by residues aspartate 293, aspartate 352, and glutamate 354. Residue arginine 356 is part of the active site.

The protein belongs to the peptidase M17 family. Requires Mn(2+) as cofactor.

It is found in the cytoplasm. It catalyses the reaction Release of an N-terminal amino acid, Xaa-|-Yaa-, in which Xaa is preferably Leu, but may be other amino acids including Pro although not Arg or Lys, and Yaa may be Pro. Amino acid amides and methyl esters are also readily hydrolyzed, but rates on arylamides are exceedingly low.. The catalysed reaction is Release of an N-terminal amino acid, preferentially leucine, but not glutamic or aspartic acids.. Presumably involved in the processing and regular turnover of intracellular proteins. Catalyzes the removal of unsubstituted N-terminal amino acids from various peptides. The protein is Probable cytosol aminopeptidase of Enterobacter sp. (strain 638).